The following is a 381-amino-acid chain: Probable tRNA sulfurtransferase (381 aa).

One can recognise a THUMP domain in the interval 52-155 (LTNLDALKYV…DASTYIFIDY (104 aa)). ATP is bound by residues 173–174 (LM), 198–199 (NF), Arg255, Gly277, and Gln286.

Belongs to the ThiI family.

The protein localises to the cytoplasm. It catalyses the reaction [ThiI sulfur-carrier protein]-S-sulfanyl-L-cysteine + a uridine in tRNA + 2 reduced [2Fe-2S]-[ferredoxin] + ATP + H(+) = [ThiI sulfur-carrier protein]-L-cysteine + a 4-thiouridine in tRNA + 2 oxidized [2Fe-2S]-[ferredoxin] + AMP + diphosphate. It carries out the reaction [ThiS sulfur-carrier protein]-C-terminal Gly-Gly-AMP + S-sulfanyl-L-cysteinyl-[cysteine desulfurase] + AH2 = [ThiS sulfur-carrier protein]-C-terminal-Gly-aminoethanethioate + L-cysteinyl-[cysteine desulfurase] + A + AMP + 2 H(+). Its pathway is cofactor biosynthesis; thiamine diphosphate biosynthesis. Catalyzes the ATP-dependent transfer of a sulfur to tRNA to produce 4-thiouridine in position 8 of tRNAs, which functions as a near-UV photosensor. Also catalyzes the transfer of sulfur to the sulfur carrier protein ThiS, forming ThiS-thiocarboxylate. This is a step in the synthesis of thiazole, in the thiamine biosynthesis pathway. The sulfur is donated as persulfide by IscS. This chain is Probable tRNA sulfurtransferase, found in Metamycoplasma arthritidis (strain 158L3-1) (Mycoplasma arthritidis).